Consider the following 270-residue polypeptide: Flagellar hook-basal body complex protein FlhO (270 aa).

It belongs to the flagella basal body rod proteins family.

Functionally, not required for motility. This is Flagellar hook-basal body complex protein FlhO (flhO) from Bacillus subtilis (strain 168).